The following is an 821-amino-acid chain: MDLAAAAEPGAGSQHPEVRDEVAEKCQKLFLDFLEEFQGSDGEIKYLQFAEELIRPERNTLVVSFADLEQFNQQLSTTIQEEFYRVYPYLCRALKTFVKDRKEIPFAKDFYVAFQDLPTRHKIRELTSSRIGLLTRISGQVVRTHPVHPELVSGTFLCLDCQTVIKDVEQQFKYTQPNICRNPVCANRKRFLLDTNKSRFVDFQKVRIQETQAELPRGSIPRSLEVILRAEAVESAQAGDRCDFTGALIVVPDVSKLSTPGARAETNSRVSGADGYETEGIRGLRALGVRDLSYRLVFLACHVAPTNPRFGGKELRDEEQTAESIKNQMTVKEWEKVFEMSQDKNLYHNLCTSLFPTIHGNDEVKRGVLLMLFGGVPKTTGEGTSLRGDINVCIVGDPSTAKSQFLKHVDEFSPRAVYTSGKASSAAGLTAAVVRDEESHEFVIEAGALMLADNGVCCIDEFDKMDMRDQVAIHEAMEQQTISITKAGVKATLNARTSILAAANPVSGHYDRSKSLKQNINLSAPIMSRFDLFFILVDECNEVTDYAIARRIVDLHSRIEESIDRVYSLDDIRRYLLFARQFKPKISKESEDFIVEQYKRLRQRDGSGVTKSSWRITVRQLESMIRLSESMARMHCCDEVQPKHVKEAFRLLNKSIIRVETPDVNLDQEEEIQMETDEGQGGVNGHADSPAPVNRFNGSSEDASQETVSKPSLRLGFAEYCRISNLIVLHLRKMEEEEDESALKRSELVNWYLKEIESEIDSEEELINKKTIIEKVVHRLTHYDHVLIELTQAGLKGSSEGSESYEEDPYLVVNPNYLLED.

Position 1 is an N-acetylmethionine (Met-1). Residues Ser-13, Ser-219, and Ser-271 each carry the phosphoserine modification. Thr-278 is subject to Phosphothreonine. Residues 346-553 enclose the MCM domain; the sequence is LYHNLCTSLF…TDYAIARRIV (208 aa). ATP is bound by residues His-359, Ser-399, Thr-400, Ala-401, Lys-402, Ser-403, and Asn-504. Positions 528–531 match the Arginine finger motif; it reads SRFD. Residues Arg-619 and Glu-622 each contribute to the ADP site. Lys-643 carries the N6-acetyllysine modification. The segment at 676–708 is disordered; sequence TDEGQGGVNGHADSPAPVNRFNGSSEDASQETV. A phosphoserine mark is found at Ser-689, Ser-704, and Ser-762. The segment covering 696–708 has biased composition (polar residues); it reads FNGSSEDASQETV. A Phosphothreonine modification is found at Thr-791.

It belongs to the MCM family. Component of the MCM2-7 complex. The complex forms a toroidal hexameric ring with the proposed subunit order MCM2-MCM6-MCM4-MCM7-MCM3-MCM5. Component of the CMG helicase complex, a hexameric ring of related MCM2-7 subunits stabilized by CDC45 and the tetrameric GINS complex. May interact with MCM10. Interacts with TIPIN. Interacts with CDT1. Interacts with MCMBP. Interacts with DDI2. Post-translationally, O-glycosylated (O-GlcNAcylated), in a cell cycle-dependent manner.

It localises to the nucleus. The protein localises to the chromosome. The enzyme catalyses ATP + H2O = ADP + phosphate + H(+). Its function is as follows. Acts as a component of the MCM2-7 complex (MCM complex) which is the replicative helicase essential for 'once per cell cycle' DNA replication initiation and elongation in eukaryotic cells. Core component of CDC45-MCM-GINS (CMG) helicase, the molecular machine that unwinds template DNA during replication, and around which the replisome is built. The active ATPase sites in the MCM2-7 ring are formed through the interaction surfaces of two neighboring subunits such that a critical structure of a conserved arginine finger motif is provided in trans relative to the ATP-binding site of the Walker A box of the adjacent subunit. The six ATPase active sites, however, are likely to contribute differentially to the complex helicase activity. In Mus musculus (Mouse), this protein is DNA replication licensing factor MCM6 (Mcm6).